The primary structure comprises 120 residues: Large ribosomal subunit protein uL22 (120 aa).

The protein belongs to the universal ribosomal protein uL22 family. In terms of assembly, part of the 50S ribosomal subunit.

Functionally, this protein binds specifically to 23S rRNA; its binding is stimulated by other ribosomal proteins, e.g. L4, L17, and L20. It is important during the early stages of 50S assembly. It makes multiple contacts with different domains of the 23S rRNA in the assembled 50S subunit and ribosome. Its function is as follows. The globular domain of the protein is located near the polypeptide exit tunnel on the outside of the subunit, while an extended beta-hairpin is found that lines the wall of the exit tunnel in the center of the 70S ribosome. In Corynebacterium aurimucosum (strain ATCC 700975 / DSM 44827 / CIP 107346 / CN-1) (Corynebacterium nigricans), this protein is Large ribosomal subunit protein uL22.